The chain runs to 218 residues: FPNVQMLPLDLRELFRDTPLADWYTAVQGRWEPYLLPVLSDASRIALMWKFGGIYLDTDFIVLKNLRNLTNVLGTQSRYVLNGAFLAFQRRHEFMALCMRDFVDHYNGWIWGHQGPQLLTRVFKKWCSIRSLAESRACRGVTTLPPEAFYPIPWQDWKKYFEDISPEELPRLLNATYAVHVWNKKSQGTRFEATSRALLAQLHARYCPTTHEAMKMYL.

Residues 57–59 (DTD) carry the DXD motif motif.

It belongs to the glycosyltransferase 32 family.

It localises to the golgi apparatus membrane. The catalysed reaction is a beta-D-Gal-(1-&gt;4)-beta-D-Glc-(1&lt;-&gt;1)-Cer(d18:1(4E)) + UDP-alpha-D-galactose = a globoside Gb3Cer (d18:1(4E)) + UDP + H(+). It catalyses the reaction a beta-D-Gal-(1&lt;-&gt;1')-ceramide + UDP-alpha-D-galactose = alpha-D-Gal-(1-&gt;4)-beta-D-Gal-(1&lt;-&gt;1')-Cer + UDP + H(+). It participates in glycolipid biosynthesis. Catalyzes the transfer of galactose from UDP-alpha-D-galactose to lactosylceramide/beta-D-galactosyl-(1-&gt;4)-beta-D-glucosyl-(1&lt;-&gt;1)-ceramide(d18:1(4E)) to produce globotriaosylceramide/globoside Gb3Cer (d18:1(4E)). Also able to transfer galactose to galactosylceramide/beta-D-Gal-(1&lt;-&gt;1')-Cer. Globoside Gb3Cer is a glycosphingolipid of the globo serie, one of the major types of neutral root structures of glycosphingolipids, that constitute a significant portion of mammalian cell membranes. This Pongo pygmaeus (Bornean orangutan) protein is Lactosylceramide 4-alpha-galactosyltransferase (A4GALT).